The following is a 235-amino-acid chain: Exotoxin type C (235 aa).

The N-terminal stretch at Met1 to Ser27 is a signal peptide. Zn(2+) is bound by residues His194, His228, and Asp230.

The protein belongs to the staphylococcal/streptococcal toxin family.

In terms of biological role, superantigen that acts as a causative agent of the symptoms associated with scarlet fever. Has been associated with streptococcal toxic shock-like disease and may play a role in the early events of rheumatic fever. Superantigens cross-link major histocompatibility complex (MHC) class II and T-cell receptor (TCR) molecules, resulting in an overstimulation of T-cells associated with a massive release of pyrogenic and inflammatory cytokines. The protein is Exotoxin type C of Streptococcus pyogenes serotype M18 (strain MGAS8232).